Here is a 394-residue protein sequence, read N- to C-terminus: Elongation factor Tu (394 aa).

Positions 10–205 (KPHVNIGTIG…VDTWIPLPPR (196 aa)) constitute a tr-type G domain. A G1 region spans residues 19–26 (GHVDHGKT). A GTP-binding site is contributed by 19 to 26 (GHVDHGKT). A Mg(2+)-binding site is contributed by Thr-26. The tract at residues 60-64 (GITIN) is G2. A G3 region spans residues 81 to 84 (DCPG). Residues 81–85 (DCPGH) and 136–139 (NKCD) each bind GTP. Residues 136-139 (NKCD) form a G4 region. Positions 174 to 176 (SAL) are G5.

Belongs to the TRAFAC class translation factor GTPase superfamily. Classic translation factor GTPase family. EF-Tu/EF-1A subfamily. In terms of assembly, monomer.

The protein resides in the cytoplasm. It carries out the reaction GTP + H2O = GDP + phosphate + H(+). GTP hydrolase that promotes the GTP-dependent binding of aminoacyl-tRNA to the A-site of ribosomes during protein biosynthesis. This is Elongation factor Tu from Bacteroides fragilis (strain ATCC 25285 / DSM 2151 / CCUG 4856 / JCM 11019 / LMG 10263 / NCTC 9343 / Onslow / VPI 2553 / EN-2).